Consider the following 611-residue polypeptide: Dihydroxy-acid dehydratase (611 aa).

Residue Asp-81 coordinates Mg(2+). Residue Cys-122 coordinates [2Fe-2S] cluster. 2 residues coordinate Mg(2+): Asp-123 and Lys-124. Lys-124 carries the N6-carboxylysine modification. Residue Cys-195 coordinates [2Fe-2S] cluster. Glu-491 provides a ligand contact to Mg(2+). The Proton acceptor role is filled by Ser-517.

It belongs to the IlvD/Edd family. As to quaternary structure, homodimer. It depends on [2Fe-2S] cluster as a cofactor. Mg(2+) is required as a cofactor.

It carries out the reaction (2R)-2,3-dihydroxy-3-methylbutanoate = 3-methyl-2-oxobutanoate + H2O. The enzyme catalyses (2R,3R)-2,3-dihydroxy-3-methylpentanoate = (S)-3-methyl-2-oxopentanoate + H2O. Its pathway is amino-acid biosynthesis; L-isoleucine biosynthesis; L-isoleucine from 2-oxobutanoate: step 3/4. It functions in the pathway amino-acid biosynthesis; L-valine biosynthesis; L-valine from pyruvate: step 3/4. Its function is as follows. Functions in the biosynthesis of branched-chain amino acids. Catalyzes the dehydration of (2R,3R)-2,3-dihydroxy-3-methylpentanoate (2,3-dihydroxy-3-methylvalerate) into 2-oxo-3-methylpentanoate (2-oxo-3-methylvalerate) and of (2R)-2,3-dihydroxy-3-methylbutanoate (2,3-dihydroxyisovalerate) into 2-oxo-3-methylbutanoate (2-oxoisovalerate), the penultimate precursor to L-isoleucine and L-valine, respectively. This Allorhizobium ampelinum (strain ATCC BAA-846 / DSM 112012 / S4) (Agrobacterium vitis (strain S4)) protein is Dihydroxy-acid dehydratase.